A 263-amino-acid polypeptide reads, in one-letter code: Imidazole glycerol phosphate synthase subunit HisF (263 aa).

Residues Asp-22 and Asp-141 contribute to the active site.

This sequence belongs to the HisA/HisF family. As to quaternary structure, heterodimer of HisH and HisF.

Its subcellular location is the cytoplasm. It carries out the reaction 5-[(5-phospho-1-deoxy-D-ribulos-1-ylimino)methylamino]-1-(5-phospho-beta-D-ribosyl)imidazole-4-carboxamide + L-glutamine = D-erythro-1-(imidazol-4-yl)glycerol 3-phosphate + 5-amino-1-(5-phospho-beta-D-ribosyl)imidazole-4-carboxamide + L-glutamate + H(+). The protein operates within amino-acid biosynthesis; L-histidine biosynthesis; L-histidine from 5-phospho-alpha-D-ribose 1-diphosphate: step 5/9. Functionally, IGPS catalyzes the conversion of PRFAR and glutamine to IGP, AICAR and glutamate. The HisF subunit catalyzes the cyclization activity that produces IGP and AICAR from PRFAR using the ammonia provided by the HisH subunit. The sequence is that of Imidazole glycerol phosphate synthase subunit HisF from Clavibacter michiganensis subsp. michiganensis (strain NCPPB 382).